A 250-amino-acid polypeptide reads, in one-letter code: 2,3-bisphosphoglycerate-dependent phosphoglycerate mutase (250 aa).

Residues 10 to 17 (RHGESQWN), 23 to 24 (TG), Arg62, 89 to 92 (ERHY), Lys100, 116 to 117 (RR), and 185 to 186 (GN) contribute to the substrate site. Residue His11 is the Tele-phosphohistidine intermediate of the active site. Catalysis depends on Glu89, which acts as the Proton donor/acceptor.

The protein belongs to the phosphoglycerate mutase family. BPG-dependent PGAM subfamily. Homodimer.

The catalysed reaction is (2R)-2-phosphoglycerate = (2R)-3-phosphoglycerate. It functions in the pathway carbohydrate degradation; glycolysis; pyruvate from D-glyceraldehyde 3-phosphate: step 3/5. In terms of biological role, catalyzes the interconversion of 2-phosphoglycerate and 3-phosphoglycerate. The sequence is that of 2,3-bisphosphoglycerate-dependent phosphoglycerate mutase from Salmonella choleraesuis (strain SC-B67).